We begin with the raw amino-acid sequence, 340 residues long: Ketol-acid reductoisomerase (NADP(+)) (340 aa).

Positions 3–182 (VQMEYEKDVK…GAARVGLLET (180 aa)) constitute a KARI N-terminal Rossmann domain. NADP(+)-binding positions include 26–29 (YGSQ), R49, S53, and 83–86 (DEIQ). The active site involves H108. Position 134 (G134) interacts with NADP(+). Residues 183–328 (TYKEETEEDL…AELRKAMPFV (146 aa)) enclose the KARI C-terminal knotted domain. 4 residues coordinate Mg(2+): D191, E195, E227, and E231. A substrate-binding site is contributed by S252.

The protein belongs to the ketol-acid reductoisomerase family. Requires Mg(2+) as cofactor.

It catalyses the reaction (2R)-2,3-dihydroxy-3-methylbutanoate + NADP(+) = (2S)-2-acetolactate + NADPH + H(+). The catalysed reaction is (2R,3R)-2,3-dihydroxy-3-methylpentanoate + NADP(+) = (S)-2-ethyl-2-hydroxy-3-oxobutanoate + NADPH + H(+). The protein operates within amino-acid biosynthesis; L-isoleucine biosynthesis; L-isoleucine from 2-oxobutanoate: step 2/4. It functions in the pathway amino-acid biosynthesis; L-valine biosynthesis; L-valine from pyruvate: step 2/4. Functionally, involved in the biosynthesis of branched-chain amino acids (BCAA). Catalyzes an alkyl-migration followed by a ketol-acid reduction of (S)-2-acetolactate (S2AL) to yield (R)-2,3-dihydroxy-isovalerate. In the isomerase reaction, S2AL is rearranged via a Mg-dependent methyl migration to produce 3-hydroxy-3-methyl-2-ketobutyrate (HMKB). In the reductase reaction, this 2-ketoacid undergoes a metal-dependent reduction by NADPH to yield (R)-2,3-dihydroxy-isovalerate. This is Ketol-acid reductoisomerase (NADP(+)) from Streptococcus pneumoniae (strain JJA).